Here is a 369-residue protein sequence, read N- to C-terminus: Mitogen-activated protein kinase 5 (369 aa).

The Protein kinase domain maps to 36-322; it reads QPPIMPIGRG…VEEALDHPYL (287 aa). ATP is bound by residues 42 to 50 and Lys-65; that span reads IGRGAYGIV. Residue Asp-162 is the Proton acceptor of the active site. Thr-194 carries the phosphothreonine modification. Residues 194 to 196 carry the TXY motif; the sequence is TEY. Tyr-196 carries the phosphotyrosine modification.

It belongs to the protein kinase superfamily. CMGC Ser/Thr protein kinase family. MAP kinase subfamily. In terms of assembly, interacts with MKK1. Post-translationally, dually phosphorylated on Thr-194 and Tyr-196, which activates the enzyme.

It catalyses the reaction L-seryl-[protein] + ATP = O-phospho-L-seryl-[protein] + ADP + H(+). It carries out the reaction L-threonyl-[protein] + ATP = O-phospho-L-threonyl-[protein] + ADP + H(+). Activated by threonine and tyrosine phosphorylation. In terms of biological role, involved in disease resistance and abiotic stress tolerance signaling pathways. This Oryza sativa subsp. indica (Rice) protein is Mitogen-activated protein kinase 5 (MPK5).